We begin with the raw amino-acid sequence, 328 residues long: L-lactate dehydrogenase (328 aa).

Residues Val18, Glu39, Lys46, Tyr71, and 85 to 86 (GA) contribute to the NAD(+) site. Substrate contacts are provided by Gln88 and Arg94. Residues Ser107, 124-126 (AAN), and Ser149 contribute to the NAD(+) site. 126–129 (NPVD) provides a ligand contact to substrate. Residue 154-157 (DSAR) participates in substrate binding. Residues Arg159 and His174 each coordinate beta-D-fructose 1,6-bisphosphate. The active-site Proton acceptor is the His181. A Phosphotyrosine modification is found at Tyr226. Thr235 contacts substrate.

The protein belongs to the LDH/MDH superfamily. LDH family. Homotetramer.

The protein localises to the cytoplasm. It carries out the reaction (S)-lactate + NAD(+) = pyruvate + NADH + H(+). It participates in fermentation; pyruvate fermentation to lactate; (S)-lactate from pyruvate: step 1/1. Allosterically activated by fructose 1,6-bisphosphate (FBP). Catalyzes the conversion of lactate to pyruvate. The polypeptide is L-lactate dehydrogenase (Streptococcus pneumoniae (strain ATCC BAA-255 / R6)).